The sequence spans 409 residues: Mitochondrial import inner membrane translocase subunit TIM50-B (409 aa).

The N-terminal 42 residues, 1–42, are a transit peptide targeting the mitochondrion; the sequence is MSLIAIERVLCGWPKICRKLIVTSRSLTSGLRRALVKQPRKG. Residues 43–127 lie on the Mitochondrial matrix side of the membrane; sequence GDVGKPGMEL…ELERAFRRMK (85 aa). Residues 93–114 form a disordered region; that stretch reads PQTSEESNDEESRERRKLEEEE. The span at 102–111 shows a compositional bias: basic and acidic residues; that stretch reads EESRERRKLE. Residues 128 to 148 traverse the membrane as a helical segment; the sequence is LGFGLFGIGSMLFSFWAIYFY. At 149–409 the chain is on the mitochondrial intermembrane side; it reads GRPSLDEHGN…KNWTRGFINH (261 aa). Residues 205–348 form the FCP1 homology domain; it reads YVQPPYTLVL…FELTSFLSVL (144 aa).

Belongs to the TIM50 family. Component of the TIM23 complex at least composed of Tim23, Tim17 (Tim17a1, Tim17a2 or Tim17b1) and a Tim50. Exclusively expressed in the testis.

It is found in the mitochondrion inner membrane. Essential component of the TIM23 complex, a complex that mediates the translocation of transit peptide-containing proteins across the mitochondrial inner membrane. The protein is Mitochondrial import inner membrane translocase subunit TIM50-B (ttm2) of Drosophila melanogaster (Fruit fly).